Consider the following 188-residue polypeptide: Adenine phosphoribosyltransferase (188 aa).

It belongs to the purine/pyrimidine phosphoribosyltransferase family. In terms of assembly, homodimer.

Its subcellular location is the cytoplasm. It catalyses the reaction AMP + diphosphate = 5-phospho-alpha-D-ribose 1-diphosphate + adenine. The protein operates within purine metabolism; AMP biosynthesis via salvage pathway; AMP from adenine: step 1/1. Its function is as follows. Catalyzes a salvage reaction resulting in the formation of AMP, that is energically less costly than de novo synthesis. This is Adenine phosphoribosyltransferase from Burkholderia ambifaria (strain MC40-6).